A 558-amino-acid polypeptide reads, in one-letter code: Ankyrin repeat protein OPG189 (558 aa).

ANK repeat units follow at residues Y65–K95, Y169–K205, H209–S239, N243–T272, F276–I304, Y339–T368, and S372–I401.

This sequence belongs to the orthopoxvirus OPG189 protein family.

Its function is as follows. Contributes to viral release without involving rearrangement of host actin. The sequence is that of Ankyrin repeat protein OPG189 (OPG189) from Homo sapiens (Human).